A 441-amino-acid polypeptide reads, in one-letter code: Phenylalanine-4-hydroxylase (441 aa).

Positions F23 to N102 constitute an ACT domain. 3 residues coordinate Fe cation: H273, H278, and E318.

This sequence belongs to the biopterin-dependent aromatic amino acid hydroxylase family. Homotetramer. Fe(2+) is required as a cofactor.

The catalysed reaction is (6R)-L-erythro-5,6,7,8-tetrahydrobiopterin + L-phenylalanine + O2 = (4aS,6R)-4a-hydroxy-L-erythro-5,6,7,8-tetrahydrobiopterin + L-tyrosine. The enzyme catalyses (6R)-L-erythro-5,6,7,8-tetrahydrobiopterin + L-tryptophan + O2 = 5-hydroxy-L-tryptophan + (4aS,6R)-4a-hydroxy-L-erythro-5,6,7,8-tetrahydrobiopterin. Its pathway is amino-acid degradation; L-phenylalanine degradation; acetoacetate and fumarate from L-phenylalanine: step 1/6. Functionally, catalyzes the hydroxylation of L-phenylalanine. Hydroxylates L-tryptophan to 5-hydroxy-L-tryptophan but does not hydroxylate L-tyrosine to L-DOPA. It uses D-threo-tetrahydrodictyopterin (DH4), also known as dictyoperin, as a cofactor. In Dictyostelium discoideum (Social amoeba), this protein is Phenylalanine-4-hydroxylase (pah).